Reading from the N-terminus, the 235-residue chain is tRNA (guanine-N(1)-)-methyltransferase (235 aa).

Residues G112 and 132–137 contribute to the S-adenosyl-L-methionine site; that span reads IGDYVI.

The protein belongs to the RNA methyltransferase TrmD family. As to quaternary structure, homodimer.

It is found in the cytoplasm. The enzyme catalyses guanosine(37) in tRNA + S-adenosyl-L-methionine = N(1)-methylguanosine(37) in tRNA + S-adenosyl-L-homocysteine + H(+). Specifically methylates guanosine-37 in various tRNAs. This chain is tRNA (guanine-N(1)-)-methyltransferase, found in Anaplasma marginale (strain Florida).